The primary structure comprises 487 residues: Homoserine O-acetyltransferase (487 aa).

Positions 45–352 (NVILVCHPLT…PHGHDGFLLE (308 aa)) constitute an AB hydrolase-1 domain. The active-site Nucleophile is the S150. A substrate-binding site is contributed by R219. Residues D313 and H346 contribute to the active site. Substrate is bound at residue D347. CBS domains follow at residues 373-430 (MTNN…FQDL) and 434-487 (MTKD…EVLQ).

The protein belongs to the AB hydrolase superfamily. MetX family. In terms of assembly, homodimer.

It localises to the cytoplasm. It carries out the reaction L-homoserine + acetyl-CoA = O-acetyl-L-homoserine + CoA. It participates in amino-acid biosynthesis; L-methionine biosynthesis via de novo pathway; O-acetyl-L-homoserine from L-homoserine: step 1/1. Functionally, transfers an acetyl group from acetyl-CoA to L-homoserine, forming acetyl-L-homoserine. The polypeptide is Homoserine O-acetyltransferase (Methanocorpusculum labreanum (strain ATCC 43576 / DSM 4855 / Z)).